We begin with the raw amino-acid sequence, 296 residues long: Syntenin-2 (296 aa).

2 PDZ domains span residues 112–191 and 196–271; these read EIHL…VRDR and TVTM…IPTV.

In terms of assembly, monomer and homodimer. Interacts with SDCBP. Interacts with TM4SF1.

It is found in the cytoplasm. The protein localises to the nucleus. Its subcellular location is the nucleolus. The protein resides in the nucleoplasm. It localises to the cell membrane. It is found in the nucleus speckle. Its function is as follows. Binds phosphatidylinositol 4,5-bisphosphate (PIP2). May play a role in the organization of nuclear PIP2, cell division and cell survival. This Rattus norvegicus (Rat) protein is Syntenin-2 (Sdcbp2).